Here is a 395-residue protein sequence, read N- to C-terminus: Renin (395 aa).

An N-terminal signal peptide occupies residues 1–21 (MLQSWEFVLLISCFLCFSSDA). Residues 22–43 (LQRISLKKMPSIRETLQEMGMK) constitute a propeptide, activation peptide. Asn-64 carries an N-linked (GlcNAc...) asparagine glycan. The Peptidase A1 domain maps to 79–392 (YYGEISIGTP…DRQNNRIGFA (314 aa)). Asp-97 is an active-site residue. 2 disulfide bridges follow: Cys-110–Cys-117 and Cys-274–Cys-278. Asp-283 is an active-site residue. Residues Cys-316 and Cys-351 are joined by a disulfide bond.

The protein belongs to the peptidase A1 family. Post-translationally, N-glycosylated. Expressed by the venom gland (at protein level).

It localises to the secreted. It carries out the reaction Cleavage of Leu-|-Xaa bond in angiotensinogen to generate angiotensin I.. Inhibited completely by aspartyl protease inhibitor pepstatin A, but not by the serine- or metalloproteinase inhibitors PMSF or EDTA. In terms of biological role, renin is a highly specific endopeptidase, whose only known function is to generate angiotensin I from angiotensinogen in the plasma, initiating a cascade of reactions that produce an elevation of blood pressure and increased sodium retention by the kidney. This protein is also found in snake venom and shown to specifically cleave human and porcine angiotensinogen into angiotensin I. It does not have general protease activity, no cleavage of alpha or beta casein. May be directly responsible for elevation of blood pressure in the victims of envenomation. The chain is Renin from Echis ocellatus (Ocellated saw-scaled viper).